Consider the following 483-residue polypeptide: Glutamyl-tRNA(Gln) amidotransferase subunit A (483 aa).

Active-site charge relay system residues include Lys-75 and Ser-150. Ser-174 serves as the catalytic Acyl-ester intermediate.

It belongs to the amidase family. GatA subfamily. Heterotrimer of A, B and C subunits.

It carries out the reaction L-glutamyl-tRNA(Gln) + L-glutamine + ATP + H2O = L-glutaminyl-tRNA(Gln) + L-glutamate + ADP + phosphate + H(+). Its function is as follows. Allows the formation of correctly charged Gln-tRNA(Gln) through the transamidation of misacylated Glu-tRNA(Gln) in organisms which lack glutaminyl-tRNA synthetase. The reaction takes place in the presence of glutamine and ATP through an activated gamma-phospho-Glu-tRNA(Gln). This chain is Glutamyl-tRNA(Gln) amidotransferase subunit A, found in Microcystis aeruginosa (strain NIES-843 / IAM M-2473).